The primary structure comprises 399 residues: Acetate kinase (399 aa).

Position 8 (Asn-8) interacts with Mg(2+). An ATP-binding site is contributed by Lys-15. Arg-89 contacts substrate. The Proton donor/acceptor role is filled by Asp-147. ATP-binding positions include 207-211 (HMGNG), 284-286 (DMR), and 332-336 (GIGEN). Glu-385 contributes to the Mg(2+) binding site.

Belongs to the acetokinase family. In terms of assembly, homodimer. Mg(2+) serves as cofactor. Mn(2+) is required as a cofactor.

It localises to the cytoplasm. The catalysed reaction is acetate + ATP = acetyl phosphate + ADP. It functions in the pathway metabolic intermediate biosynthesis; acetyl-CoA biosynthesis; acetyl-CoA from acetate: step 1/2. Functionally, catalyzes the formation of acetyl phosphate from acetate and ATP. Can also catalyze the reverse reaction. The sequence is that of Acetate kinase from Streptococcus mutans serotype c (strain ATCC 700610 / UA159).